We begin with the raw amino-acid sequence, 1663 residues long: Centrosomal protein of 152 kDa (1663 aa).

The segment at 1 to 60 (MSIDFDSGALQTQQEDEEYDKEDYAREQELQQLLTDLPHDMLDDSLSSSPEPSYSDCSGH) is disordered. The segment covering 44 to 57 (DSLSSSPEPSYSDC) has biased composition (low complexity). Coiled-coil stretches lie at residues 266–516 (LQVL…ARLG), 571–664 (ELER…KHLL), 696–796 (QDKK…VTAK), 843–886 (SDCI…VEVA), 946–977 (DFTVRQKEFEEKIASMKRELELKAEESQALLK), 1014–1047 (RNKLTDTLSTAKVEFEKQKNELIAQKDREMAERL), and 1182–1288 (VQQL…KNDM). 2 disordered regions span residues 1383–1408 (ETTQDQRSLQKPAHSHQNNNPLNQNI) and 1595–1628 (KRKDENSGRKYSNKIQEPSATGIHPESKLFSDVG). Residues 1603–1613 (RKYSNKIQEPS) show a composition bias toward polar residues.

Belongs to the CEP152 family.

It is found in the cytoplasm. The protein localises to the cytoskeleton. It localises to the microtubule organizing center. Its subcellular location is the centrosome. The protein resides in the centriole. Necessary for centrosome duplication; the function also seems to involve cep63, cdk5rap2 and wdr62 through a stepwise assembled complex at the centrosome that recruits cdk2 required for centriole duplication. Acts as a molecular scaffold facilitating the interaction of plk4 and cpap, 2 molecules involved in centriole formation. Also plays a key role in deuterosome-mediated centriole amplification in multiciliated that can generate more than 100 centrioles. Overexpression of cep152 can drive amplification of centrioles. This chain is Centrosomal protein of 152 kDa (cep152), found in Xenopus laevis (African clawed frog).